Consider the following 461-residue polypeptide: Serine--tRNA ligase (461 aa).

The interval Glu112–Phe134 is disordered. The span at Pro114–Phe134 shows a compositional bias: basic and acidic residues. Thr252 to Glu254 is an L-serine binding site. Residue Arg283–Glu285 participates in ATP binding. Glu306 is an L-serine binding site. Glu370–Ser373 is an ATP binding site. Ser406 contributes to the L-serine binding site.

The protein belongs to the class-II aminoacyl-tRNA synthetase family. Type-1 seryl-tRNA synthetase subfamily. In terms of assembly, homodimer. The tRNA molecule binds across the dimer.

Its subcellular location is the cytoplasm. The catalysed reaction is tRNA(Ser) + L-serine + ATP = L-seryl-tRNA(Ser) + AMP + diphosphate + H(+). It carries out the reaction tRNA(Sec) + L-serine + ATP = L-seryl-tRNA(Sec) + AMP + diphosphate + H(+). The protein operates within aminoacyl-tRNA biosynthesis; selenocysteinyl-tRNA(Sec) biosynthesis; L-seryl-tRNA(Sec) from L-serine and tRNA(Sec): step 1/1. Functionally, catalyzes the attachment of serine to tRNA(Ser). Is also able to aminoacylate tRNA(Sec) with serine, to form the misacylated tRNA L-seryl-tRNA(Sec), which will be further converted into selenocysteinyl-tRNA(Sec). In Methylocella silvestris (strain DSM 15510 / CIP 108128 / LMG 27833 / NCIMB 13906 / BL2), this protein is Serine--tRNA ligase.